Reading from the N-terminus, the 259-residue chain is Undecaprenyl-diphosphatase 3 (259 aa).

8 helical membrane passes run 1–21 (MNWL…FLPI), 39–59 (AGLF…FIYY), 71–91 (FSKL…IGLL), 99–119 (ISKT…FLYM), 133–153 (ITYK…FPAI), 174–194 (AYFS…LQFV), 208–228 (SLIV…SWMI), and 239–259 (FAYY…TDVF).

This sequence belongs to the UppP family.

It is found in the cell membrane. It carries out the reaction di-trans,octa-cis-undecaprenyl diphosphate + H2O = di-trans,octa-cis-undecaprenyl phosphate + phosphate + H(+). Its function is as follows. Catalyzes the dephosphorylation of undecaprenyl diphosphate (UPP). Confers resistance to bacitracin. The polypeptide is Undecaprenyl-diphosphatase 3 (Bacillus cereus (strain ATCC 14579 / DSM 31 / CCUG 7414 / JCM 2152 / NBRC 15305 / NCIMB 9373 / NCTC 2599 / NRRL B-3711)).